The following is an 878-amino-acid chain: Protein translocase subunit SecA (878 aa).

Residues Gln79, 97 to 101, and Asp487 contribute to the ATP site; that span reads GEGKT.

The protein belongs to the SecA family.

The protein localises to the plastid. Its subcellular location is the chloroplast stroma. It localises to the chloroplast thylakoid membrane. It carries out the reaction ATP + H2O + cellular proteinSide 1 = ADP + phosphate + cellular proteinSide 2.. Functionally, has a central role in coupling the hydrolysis of ATP to the transfer of proteins across the thylakoid membrane. The chain is Protein translocase subunit SecA from Antithamnion sp. (Red alga).